The chain runs to 560 residues: Diphtheria toxin (560 aa).

The N-terminal stretch at 1 to 25 (MSRKLFASILIGALLGIGAPPSAHA) is a signal peptide. NAD(+) contacts are provided by histidine 46 and tyrosine 90. Residue glutamate 173 is part of the active site. Disulfide bonds link cysteine 211–cysteine 226 and cysteine 486–cysteine 496.

As to quaternary structure, homodimer.

The catalysed reaction is diphthamide-[translation elongation factor 2] + NAD(+) = N-(ADP-D-ribosyl)diphthamide-[translation elongation factor 2] + nicotinamide + H(+). Its function is as follows. Diphtheria toxin, produced by a phage infecting Corynebacterium diphtheriae, is a proenzyme that, after activation, catalyzes the covalent attachment of the ADP ribose moiety of NAD to elongation factor 2. Fragment A is responsible for enzymatic ADP-ribosylation of elongation factor 2, while fragment B is responsible for binding of toxin to cell receptors and entry of fragment A. This is Diphtheria toxin from Corynephage omega.